A 322-amino-acid polypeptide reads, in one-letter code: Tetrahydromethanopterin S-methyltransferase subunit H (322 aa).

It belongs to the MtrH family. In terms of assembly, the complex is composed of 8 subunits; MtrA, MtrB, MtrC, MtrD, MtrE, MtrF, MtrG and MtrH.

It catalyses the reaction 5-methyl-5,6,7,8-tetrahydromethanopterin + coenzyme M + 2 Na(+)(in) = 5,6,7,8-tetrahydromethanopterin + methyl-coenzyme M + 2 Na(+)(out). The protein operates within one-carbon metabolism; methanogenesis from CO(2); methyl-coenzyme M from 5,10-methylene-5,6,7,8-tetrahydromethanopterin: step 2/2. Part of a complex that catalyzes the formation of methyl-coenzyme M and tetrahydromethanopterin from coenzyme M and methyl-tetrahydromethanopterin. This is an energy-conserving, sodium-ion translocating step. MtrH catalyzes the transfer of the methyl group from methyl-tetrahydromethanopterin to the corrinoid prosthetic group of MtrA. The protein is Tetrahydromethanopterin S-methyltransferase subunit H of Methanopyrus kandleri (strain AV19 / DSM 6324 / JCM 9639 / NBRC 100938).